The following is an 899-amino-acid chain: Probable dipeptidyl-aminopeptidase B (899 aa).

Positions 1–69 (MKLDRMRVGS…NHNGRTQGNY (69 aa)) are disordered. Residues 1 to 99 (MKLDRMRVGS…NGKSSQRRTL (99 aa)) lie on the Cytoplasmic side of the membrane. Residues 32-43 (DSSSTASISLTL) show a composition bias toward low complexity. Residues 100–120 (IVFWLLVALCVGGWAVAFLFF) form a helical; Signal-anchor for type II membrane protein membrane-spanning segment. Topologically, residues 121–899 (VTSPGNKTST…KYFNLSFLGH (779 aa)) are vacuolar. Positions 128-139 (TSTSPHSGSNSP) are enriched in polar residues. The interval 128-149 (TSTSPHSGSNSPEGDVTKPGIP) is disordered. 3 N-linked (GlcNAc...) asparagine glycosylation sites follow: Asn-212, Asn-308, and Asn-360. The active-site Charge relay system is the Ser-765. 3 N-linked (GlcNAc...) asparagine glycosylation sites follow: Asn-819, Asn-824, and Asn-827. Catalysis depends on charge relay system residues Asp-842 and His-875. An N-linked (GlcNAc...) asparagine glycan is attached at Asn-893.

The protein belongs to the peptidase S9B family.

It is found in the vacuole membrane. It carries out the reaction Release of an N-terminal dipeptide, Xaa-Yaa-|-Zaa-, from a polypeptide, preferentially when Yaa is Pro, provided Zaa is neither Pro nor hydroxyproline.. Its function is as follows. Type IV dipeptidyl-peptidase which removes N-terminal dipeptides sequentially from polypeptides having unsubstituted N-termini provided that the penultimate residue is proline. This chain is Probable dipeptidyl-aminopeptidase B (DAPB), found in Trichophyton verrucosum (strain HKI 0517).